The sequence spans 716 residues: Delta-1-pyrroline-5-carboxylate synthase 1 (716 aa).

Residues 1-296 (MASVDPSRSF…WESSKDVSTR (296 aa)) are glutamate 5-kinase. Substrate is bound by residues Ser60, Asp157, and Asn176. ATP-binding positions include 196–197 (SD), 202–207 (YSGPPS), and 236–242 (RGGMTAK). Positions 297 to 716 (EMAVAARDCS…VYTHKSLPLQ (420 aa)) are gamma-glutamyl phosphate reductase.

In the N-terminal section; belongs to the glutamate 5-kinase family. The protein in the C-terminal section; belongs to the gamma-glutamyl phosphate reductase family. Expressed at high levels in leaves.

It catalyses the reaction L-glutamate + ATP = L-glutamyl 5-phosphate + ADP. It carries out the reaction L-glutamate 5-semialdehyde + phosphate + NADP(+) = L-glutamyl 5-phosphate + NADPH + H(+). Its pathway is amino-acid biosynthesis; L-proline biosynthesis; L-glutamate 5-semialdehyde from L-glutamate: step 1/2. It functions in the pathway amino-acid biosynthesis; L-proline biosynthesis; L-glutamate 5-semialdehyde from L-glutamate: step 2/2. With respect to regulation, feedback regulated by proline. Functionally, P5CS plays a key role in proline biosynthesis, leading to osmoregulation in plants. Involved in abiotic stress tolerance. The protein is Delta-1-pyrroline-5-carboxylate synthase 1 of Oryza sativa subsp. japonica (Rice).